The primary structure comprises 325 residues: Ribose-phosphate pyrophosphokinase 4 (325 aa).

Mg(2+) is bound by residues Asp-145 and His-147. A binding of phosphoribosylpyrophosphate region spans residues 228 to 243 (GRHVVIVDDLVQSGGT).

This sequence belongs to the ribose-phosphate pyrophosphokinase family. The cofactor is Mg(2+).

It catalyses the reaction D-ribose 5-phosphate + ATP = 5-phospho-alpha-D-ribose 1-diphosphate + AMP + H(+). This is Ribose-phosphate pyrophosphokinase 4 from Oryza sativa subsp. japonica (Rice).